A 301-amino-acid chain; its full sequence is Homoserine O-acetyltransferase (301 aa).

The active-site Acyl-thioester intermediate is Cys142. The substrate site is built by Lys163 and Ser192. The active-site Proton acceptor is the His235. Glu237 is a catalytic residue. Arg249 contributes to the substrate binding site.

It belongs to the MetA family.

It localises to the cytoplasm. It carries out the reaction L-homoserine + acetyl-CoA = O-acetyl-L-homoserine + CoA. The protein operates within amino-acid biosynthesis; L-methionine biosynthesis via de novo pathway; O-acetyl-L-homoserine from L-homoserine: step 1/1. In terms of biological role, transfers an acetyl group from acetyl-CoA to L-homoserine, forming acetyl-L-homoserine. This is Homoserine O-acetyltransferase from Succinatimonas hippei (strain DSM 22608 / JCM 16073 / KCTC 15190 / YIT 12066).